The following is a 425-amino-acid chain: Glutamate-1-semialdehyde 2,1-aminomutase (425 aa).

K265 is modified (N6-(pyridoxal phosphate)lysine).

The protein belongs to the class-III pyridoxal-phosphate-dependent aminotransferase family. HemL subfamily. In terms of assembly, homodimer. Pyridoxal 5'-phosphate is required as a cofactor.

The protein resides in the cytoplasm. It carries out the reaction (S)-4-amino-5-oxopentanoate = 5-aminolevulinate. Its pathway is porphyrin-containing compound metabolism; protoporphyrin-IX biosynthesis; 5-aminolevulinate from L-glutamyl-tRNA(Glu): step 2/2. In Clostridium perfringens (strain ATCC 13124 / DSM 756 / JCM 1290 / NCIMB 6125 / NCTC 8237 / Type A), this protein is Glutamate-1-semialdehyde 2,1-aminomutase.